The primary structure comprises 399 residues: tRNA-specific 2-thiouridylase MnmA (399 aa).

ATP contacts are provided by residues Ala-18–Ser-25 and Leu-44. Residue Cys-112 is the Nucleophile of the active site. Residues Cys-112 and Cys-213 are joined by a disulfide bond. Gly-136 is a binding site for ATP. Residues Arg-163 to Gln-165 form an interaction with tRNA region. The active-site Cysteine persulfide intermediate is Cys-213.

The protein belongs to the MnmA/TRMU family.

It is found in the cytoplasm. The enzyme catalyses S-sulfanyl-L-cysteinyl-[protein] + uridine(34) in tRNA + AH2 + ATP = 2-thiouridine(34) in tRNA + L-cysteinyl-[protein] + A + AMP + diphosphate + H(+). Functionally, catalyzes the 2-thiolation of uridine at the wobble position (U34) of tRNA, leading to the formation of s(2)U34. The polypeptide is tRNA-specific 2-thiouridylase MnmA (Rhizobium rhizogenes (strain K84 / ATCC BAA-868) (Agrobacterium radiobacter)).